The following is a 76-amino-acid chain: MKLTCMMIVAVLFLTAWTFATADDSSNGLENLFPKAHHEMKNPEASKLNERCLDAGEICDFFFPTCCGYCILLFCA.

The first 22 residues, 1–22 (MKLTCMMIVAVLFLTAWTFATA), serve as a signal peptide directing secretion. Positions 23–50 (DDSSNGLENLFPKAHHEMKNPEASKLNE) are excised as a propeptide. Intrachain disulfides connect cysteine 52–cysteine 67, cysteine 59–cysteine 70, and cysteine 66–cysteine 75.

It belongs to the conotoxin O1 superfamily. As to expression, expressed by the venom duct.

The protein localises to the secreted. Omega-conotoxins act at presynaptic membranes, they bind and block voltage-gated calcium channels (Cav). The chain is Omega-conotoxin-like TxMKLT1-0141 from Conus textile (Cloth-of-gold cone).